Here is a 98-residue protein sequence, read N- to C-terminus: MAHEHGHEHGHHKMELPDYRQWKIEGTPLETIQKKLAAKGLRDPWGRNEAWRYMGGFAKSVSFSDVFFKGFKWGFAAFVVAVGAEYYLESLNKDKKHH.

The residue at position 2 (Ala2) is an N-acetylalanine. Pros-methylhistidine is present on residues His5, His7, and His9. N6-acetyllysine; alternate is present on residues Lys23 and Lys34. N6-succinyllysine; alternate is present on residues Lys23 and Lys34. Residues 66 to 88 form a helical membrane-spanning segment; that stretch reads VFFKGFKWGFAAFVVAVGAEYYL.

It belongs to the complex I NDUFB3 subunit family. Complex I is composed of 45 different subunits. In terms of processing, methylation at His residues by METTL9 enhances complex I-mediated mitochondrial respiration.

Its subcellular location is the mitochondrion inner membrane. Accessory subunit of the mitochondrial membrane respiratory chain NADH dehydrogenase (Complex I), that is believed not to be involved in catalysis. Complex I functions in the transfer of electrons from NADH to the respiratory chain. The immediate electron acceptor for the enzyme is believed to be ubiquinone. The sequence is that of NADH dehydrogenase [ubiquinone] 1 beta subcomplex subunit 3 (NDUFB3) from Gorilla gorilla gorilla (Western lowland gorilla).